A 393-amino-acid chain; its full sequence is Chorismate synthase (393 aa).

The NADP(+) site is built by Arg-48 and Arg-54. Residues Arg-125–Ser-127, Asn-238–Ala-239, Gly-278, Lys-293–Ser-297, and Arg-319 contribute to the FMN site. Residues Ala-355–Ala-393 are disordered.

The protein belongs to the chorismate synthase family. Homotetramer. FMNH2 serves as cofactor.

The catalysed reaction is 5-O-(1-carboxyvinyl)-3-phosphoshikimate = chorismate + phosphate. It participates in metabolic intermediate biosynthesis; chorismate biosynthesis; chorismate from D-erythrose 4-phosphate and phosphoenolpyruvate: step 7/7. Catalyzes the anti-1,4-elimination of the C-3 phosphate and the C-6 proR hydrogen from 5-enolpyruvylshikimate-3-phosphate (EPSP) to yield chorismate, which is the branch point compound that serves as the starting substrate for the three terminal pathways of aromatic amino acid biosynthesis. This reaction introduces a second double bond into the aromatic ring system. In Nitrosospira multiformis (strain ATCC 25196 / NCIMB 11849 / C 71), this protein is Chorismate synthase.